A 255-amino-acid chain; its full sequence is tRNA (guanine-N(7)-)-methyltransferase (255 aa).

The S-adenosyl-L-methionine site is built by Glu-64, Glu-89, Asp-116, and Asp-138. Asp-138 is a catalytic residue. Substrate is bound by residues Lys-142, Asp-174, and 212-215 (TRYE).

It belongs to the class I-like SAM-binding methyltransferase superfamily. TrmB family.

It catalyses the reaction guanosine(46) in tRNA + S-adenosyl-L-methionine = N(7)-methylguanosine(46) in tRNA + S-adenosyl-L-homocysteine. Its pathway is tRNA modification; N(7)-methylguanine-tRNA biosynthesis. In terms of biological role, catalyzes the formation of N(7)-methylguanine at position 46 (m7G46) in tRNA. In Rhodospirillum rubrum (strain ATCC 11170 / ATH 1.1.1 / DSM 467 / LMG 4362 / NCIMB 8255 / S1), this protein is tRNA (guanine-N(7)-)-methyltransferase.